Consider the following 457-residue polypeptide: G-protein coupled receptor 135 (457 aa).

The disordered stretch occupies residues 1 to 27 (MEEQARPPSRPAASATLPGSAHPGGAA). At 1-64 (MEEQARPPSR…EAAGSRGPAP (64 aa)) the chain is on the extracellular side. Asn-47 carries N-linked (GlcNAc...) asparagine glycosylation. Residues 65–85 (LLWHGAAVAAQALVLLLIFLL) traverse the membrane as a helical segment. Residues 86 to 109 (SSLGNCAVMGVIVKHRQLRTVTNA) are Cytoplasmic-facing. A helical membrane pass occupies residues 110-130 (FILSLSLSDLLTALLCLPAAF). Topologically, residues 131-156 (LDLFAPPGDSGPWRSFCAASRFFSSC) are extracellular. The chain crosses the membrane as a helical span at residues 157–177 (FGIVSTFSVALISLDRYCAIV). Topologically, residues 178–189 (RPPRDKLGRRRA) are cytoplasmic. Residues 190 to 210 (LQLLAGAWLAALGFSLPWELL) traverse the membrane as a helical segment. Over 211–235 (RAPREPPTPQSFHRCLYRTSPDPAQ) the chain is Extracellular. Residues 236 to 256 (LGAAYSVGLVVACYLLPFLLM) form a helical membrane-spanning segment. Over 257-295 (CFCRYHICKTVRLSDVRVRPMTTYARVLRFFSEVRTATT) the chain is Cytoplasmic. A helical membrane pass occupies residues 296 to 316 (VLIMIVFVICCWGPYCFLVLL). The Extracellular segment spans residues 317-329 (AATRQGQTTQAPS). Residues 330 to 350 (LLNVAAVWLTWANGAINPVIY) traverse the membrane as a helical segment. The Cytoplasmic segment spans residues 351–457 (AIRNPNISMF…HKSETRDSSI (107 aa)).

This sequence belongs to the G-protein coupled receptor 1 family. As to quaternary structure, interacts with MTNR1B. Interacts with ARRB1 and ARRB2 in a spontaneous and agonist-independent manner; leading to the internalization of GPR135 in the endosomal compartment.

The protein localises to the cell membrane. It is found in the endosome membrane. Orphan receptor. Has spontaneous activity for beta-arrestin recruitment. Shows a reciprocal regulatory interaction with the melatonin receptor MTNR1B most likely through receptor heteromerization. This chain is G-protein coupled receptor 135 (Gpr135), found in Rattus norvegicus (Rat).